Reading from the N-terminus, the 75-residue chain is Large ribosomal subunit protein uL24c (75 aa).

Belongs to the universal ribosomal protein uL24 family. As to quaternary structure, part of the 50S ribosomal subunit.

The protein resides in the plastid. Its subcellular location is the chloroplast. One of two assembly initiator proteins, it binds directly to the 5'-end of the 23S rRNA, where it nucleates assembly of the 50S subunit. This is Large ribosomal subunit protein uL24c (rpl24) from Cyanidioschyzon merolae (strain NIES-3377 / 10D) (Unicellular red alga).